A 129-amino-acid polypeptide reads, in one-letter code: SOSS complex subunit C homolog (129 aa).

Residues 105–129 form a disordered region; it reads RLEPLPSPATTPTTPNAPPSHNISK.

This sequence belongs to the SOSS-C family.

The polypeptide is SOSS complex subunit C homolog (Drosophila erecta (Fruit fly)).